The chain runs to 173 residues: Alpha-crystallin A chain (173 aa).

Met1 carries the post-translational modification N-acetylmethionine. The required for complex formation with BFSP1 and BFSP2 stretch occupies residues 1-63 (MDIAIQHPWF…RTVLDSGISE (63 aa)). At Gln6 the chain carries Deamidated glutamine; partial. The residue at position 45 (Ser45) is a Phosphoserine. Gln50 is subject to Deamidated glutamine; partial. In terms of domain architecture, sHSP spans 52 to 162 (LFRTVLDSGI…GHSERAIPVS (111 aa)). Lys70 is subject to N6-acetyllysine. Residue Gln90 is modified to Deamidated glutamine; partial. Residue Lys99 is modified to N6-acetyllysine. A Zn(2+)-binding site is contributed by His100. Asn101 is subject to Deamidated asparagine; partial. Residues Glu102 and His107 each coordinate Zn(2+). A Phosphoserine modification is found at Ser122. A Deamidated asparagine; partial modification is found at Asn123. The tract at residues 144 to 173 (PKVPSGVDAGHSERAIPVSREEKPSSAPSS) is disordered. Over residues 153 to 167 (GHSERAIPVSREEKP) the composition is skewed to basic and acidic residues. Position 154 (His154) interacts with Zn(2+). A glycan (O-linked (GlcNAc) serine) is linked at Ser162.

The protein belongs to the small heat shock protein (HSP20) family. In terms of assembly, heteromer composed of three CRYAA and one CRYAB subunits. Inter-subunit bridging via zinc ions enhances stability, which is crucial as there is no protein turn over in the lens. Can also form homodimers and homotetramers (dimers of dimers) which serve as the building blocks of homooligomers. Within homooligomers, the zinc-binding motif is created from residues of 3 different molecules. His-100 and Glu-102 from one molecule are ligands of the zinc ion, and His-107 and His-154 residues from additional molecules complete the site with tetrahedral coordination geometry. Part of a complex required for lens intermediate filament formation composed of BFSP1, BFSP2 and CRYAA. In terms of processing, acetylation at Lys-70 may increase chaperone activity. Post-translationally, undergoes age-dependent proteolytical cleavage at the C-terminus.

The protein localises to the cytoplasm. Its subcellular location is the nucleus. Its function is as follows. Contributes to the transparency and refractive index of the lens. Acts as a chaperone, preventing aggregation of various proteins under a wide range of stress conditions. Required for the correct formation of lens intermediate filaments as part of a complex composed of BFSP1, BFSP2 and CRYAA. This Ovis aries (Sheep) protein is Alpha-crystallin A chain (CRYAA).